Reading from the N-terminus, the 88-residue chain is MVRIRLARGGAKKRPFYQIIVTDNHQARDGRFIERVGFFNPLATGQAVDLRLNMDRILYWINHGAKMSERLYALIKSAKNKSQYSSAG.

This sequence belongs to the bacterial ribosomal protein bS16 family.

This Baumannia cicadellinicola subsp. Homalodisca coagulata protein is Small ribosomal subunit protein bS16.